Here is a 337-residue protein sequence, read N- to C-terminus: 1-aminocyclopropane-1-carboxylate deaminase (337 aa).

Lysine 50 carries the N6-(pyridoxal phosphate)lysine modification.

It belongs to the ACC deaminase/D-cysteine desulfhydrase family. As to quaternary structure, homotrimer. Pyridoxal 5'-phosphate is required as a cofactor.

It carries out the reaction 1-aminocyclopropane-1-carboxylate + H2O = 2-oxobutanoate + NH4(+). Catalyzes a cyclopropane ring-opening reaction, the irreversible conversion of 1-aminocyclopropane-1-carboxylate (ACC) to ammonia and alpha-ketobutyrate. Allows growth on ACC as a nitrogen source. The protein is 1-aminocyclopropane-1-carboxylate deaminase of Mesorhizobium japonicum (strain LMG 29417 / CECT 9101 / MAFF 303099) (Mesorhizobium loti (strain MAFF 303099)).